A 275-amino-acid chain; its full sequence is Ribosomal RNA small subunit methyltransferase A (275 aa).

Positions 21, 23, 48, 69, 94, and 115 each coordinate S-adenosyl-L-methionine.

This sequence belongs to the class I-like SAM-binding methyltransferase superfamily. rRNA adenine N(6)-methyltransferase family. RsmA subfamily.

It localises to the cytoplasm. The enzyme catalyses adenosine(1518)/adenosine(1519) in 16S rRNA + 4 S-adenosyl-L-methionine = N(6)-dimethyladenosine(1518)/N(6)-dimethyladenosine(1519) in 16S rRNA + 4 S-adenosyl-L-homocysteine + 4 H(+). Specifically dimethylates two adjacent adenosines (A1518 and A1519) in the loop of a conserved hairpin near the 3'-end of 16S rRNA in the 30S particle. May play a critical role in biogenesis of 30S subunits. The sequence is that of Ribosomal RNA small subunit methyltransferase A from Clostridium botulinum (strain Langeland / NCTC 10281 / Type F).